A 982-amino-acid chain; its full sequence is E3 ubiquitin-protein ligase CBL-B (982 aa).

Positions 35–167 are 4H; the sequence is PPKQAAADRR…KAIFPNGQFQ (133 aa). The Cbl-PTB domain maps to 35-343; it reads PPKQAAADRR…GRSYNPDLTG (309 aa). An EF-hand-like region spans residues 168-240; it reads GDNFRITKAD…FEFDIFTRLF (73 aa). Positions 221, 223, 225, 227, and 232 each coordinate Ca(2+). Residues 241–343 form an SH2-like region; sequence QPWGSILRNW…GRSYNPDLTG (103 aa). Position 282 is a phosphoserine; by PKC/PRKCQ (serine 282). Arginine 286 contacts 4-O-phospho-L-tyrosine. The tract at residues 344-372 is linker; the sequence is LCEPTPHDHIKVTQEQYELYCEMGSTFQL. A Phosphotyrosine modification is found at tyrosine 363. The RING-type zinc finger occupies 373 to 412; it reads CKICAENDKDVKIEPCGHLMCTSCLTAWQESDGQGCPFCR. Residues 466–571 are disordered; that stretch reads NVRKCTDRQN…PPPIPPDNRL (106 aa). The segment covering 473 to 486 has biased composition (polar residues); it reads RQNSPVTSPGSSPL. Phosphoserine is present on residues serine 476, serine 480, serine 484, serine 521, serine 525, and serine 529. The interval 543-568 is interaction with VAV1; that stretch reads PLPAPPPPLRDPPPPPPERPPPIPPD. The span at 544–567 shows a compositional bias: pro residues; sequence LPAPPPPLRDPPPPPPERPPPIPP. The residue at position 634 (serine 634) is a Phosphoserine. 2 positions are modified to phosphotyrosine: tyrosine 665 and tyrosine 709. Disordered regions lie at residues 688-731 and 769-929; these read GPLA…NVKP and FDSA…EAAL. The span at 715–725 shows a compositional bias: polar residues; it reads HPVSLNSQPSH. Residues 819–828 show a composition bias toward pro residues; it reads PSLPPPPPPA. Over residues 838-848 the composition is skewed to low complexity; the sequence is PPGSSSRPSSG. A compositionally biased stretch (polar residues) spans 880–899; sequence VKTNRTSQDYDQLPSCSDGS. Tyrosine 889 carries the post-translational modification Phosphotyrosine. The interaction with SH3KBP1 stretch occupies residues 891–927; sequence QLPSCSDGSQAPARPPKPRPRRTAPEIHHRKPHGPEA. The span at 906–922 shows a compositional bias: basic residues; it reads PKPRPRRTAPEIHHRKP. The 40-residue stretch at 931-970 folds into the UBA domain; sequence NVDAKIAKLMGEGYAFEEVKRALEIAQNNVEVARSILREF.

In terms of assembly, interacts with SH3 domain-containing proteins LCK, CRK and SORBS1. Interacts with LCP2 and ZAP70. Interacts with CBL. Interacts with SH3 domain-containing proteins VAV1, FYN, FGR, PLCG1, GRB2, CRKL, PIK3R1 and SH3KBP1/CIN85. Identified in heterotrimeric complexes with SH3KBP1/CIN85, CD2AP and ARHGEF7, where one CBLB peptide binds two copies of the other protein. Interacts with poly-ubiquitinated proteins. Dimerization is required for the binding of poly-ubiquitin, but not for the binding of mono-ubiquitin. Interacts with EGFR (phosphorylated). Interacts with IFT20. Post-translationally, phosphorylated on tyrosine and serine residues upon TCR or BCR activation, and upon various types of cell stimulation. In terms of processing, auto-ubiquitinated upon EGF-mediated cell activation or upon T-cell costimulation by CD28; which promotes proteasomal degradation. In terms of tissue distribution, expressed in placenta, heart, lung, kidney, spleen, ovary and testis, as well as fetal brain and liver and hematopoietic cell lines, but not in adult brain, liver, pancreas, salivary gland, or skeletal muscle. Present in lymphocytes (at protein level).

It localises to the cytoplasm. The catalysed reaction is S-ubiquitinyl-[E2 ubiquitin-conjugating enzyme]-L-cysteine + [acceptor protein]-L-lysine = [E2 ubiquitin-conjugating enzyme]-L-cysteine + N(6)-ubiquitinyl-[acceptor protein]-L-lysine.. The protein operates within protein modification; protein ubiquitination. E3 ubiquitin-protein ligase which accepts ubiquitin from specific E2 ubiquitin-conjugating enzymes, and transfers it to substrates, generally promoting their degradation by the proteasome. Negatively regulates TCR (T-cell receptor), BCR (B-cell receptor) and FCER1 (high affinity immunoglobulin epsilon receptor) signal transduction pathways. In naive T-cells, inhibits VAV1 activation upon TCR engagement and imposes a requirement for CD28 costimulation for proliferation and IL-2 production. Also acts by promoting PIK3R1/p85 ubiquitination, which impairs its recruitment to the TCR and subsequent activation. In activated T-cells, inhibits PLCG1 activation and calcium mobilization upon restimulation and promotes anergy. In B-cells, acts by ubiquitinating SYK and promoting its proteasomal degradation. Slightly promotes SRC ubiquitination. May be involved in EGFR ubiquitination and internalization. May be functionally coupled with the E2 ubiquitin-protein ligase UB2D3. In association with CBL, required for proper feedback inhibition of ciliary platelet-derived growth factor receptor-alpha (PDGFRA) signaling pathway via ubiquitination and internalization of PDGFRA. In Homo sapiens (Human), this protein is E3 ubiquitin-protein ligase CBL-B (CBLB).